Consider the following 364-residue polypeptide: UDP-N-acetylglucosamine--N-acetylmuramyl-(pentapeptide) pyrophosphoryl-undecaprenol N-acetylglucosamine transferase (364 aa).

Residues 15-17 (TGG), Asn123, Arg164, Ser191, and Gln286 contribute to the UDP-N-acetyl-alpha-D-glucosamine site.

This sequence belongs to the glycosyltransferase 28 family. MurG subfamily.

The protein localises to the cell inner membrane. It catalyses the reaction di-trans,octa-cis-undecaprenyl diphospho-N-acetyl-alpha-D-muramoyl-L-alanyl-D-glutamyl-meso-2,6-diaminopimeloyl-D-alanyl-D-alanine + UDP-N-acetyl-alpha-D-glucosamine = di-trans,octa-cis-undecaprenyl diphospho-[N-acetyl-alpha-D-glucosaminyl-(1-&gt;4)]-N-acetyl-alpha-D-muramoyl-L-alanyl-D-glutamyl-meso-2,6-diaminopimeloyl-D-alanyl-D-alanine + UDP + H(+). It participates in cell wall biogenesis; peptidoglycan biosynthesis. Cell wall formation. Catalyzes the transfer of a GlcNAc subunit on undecaprenyl-pyrophosphoryl-MurNAc-pentapeptide (lipid intermediate I) to form undecaprenyl-pyrophosphoryl-MurNAc-(pentapeptide)GlcNAc (lipid intermediate II). This chain is UDP-N-acetylglucosamine--N-acetylmuramyl-(pentapeptide) pyrophosphoryl-undecaprenol N-acetylglucosamine transferase, found in Prochlorococcus marinus (strain MIT 9515).